A 1257-amino-acid polypeptide reads, in one-letter code: Phosphatidylinositol 3,4,5-trisphosphate 5-phosphatase 2 (1257 aa).

Positions 21 to 117 constitute an SH2 domain; it reads WYHRDLSRAA…GLVCALLLPV (97 aa). Basic and acidic residues predominate over residues 119–132; it reads GEREPDPPDDRDAS. Positions 119–181 are disordered; sequence GEREPDPPDD…ESTPNGLSTV (63 aa). Serine 132 is modified (phosphoserine). The span at 156–166 shows a compositional bias: pro residues; the sequence is PSSPLPAPETP. The residue at position 165 (threonine 165) is a Phosphothreonine. Phosphoserine is present on residues serine 241 and serine 353. Tyrosine 887 carries the post-translational modification Phosphotyrosine. Residue serine 891 is modified to Phosphoserine. The disordered stretch occupies residues 897-986; the sequence is TGAKSKAPSV…PPKNSFNNPA (90 aa). Over residues 939-951 the composition is skewed to pro residues; it reads PPPTGRPPAPPRA. The SH3-binding motif lies at 945–950; it reads PPAPPR. The span at 952–966 shows a compositional bias: basic and acidic residues; the sequence is VPREESLNPRLKSEG. The short motif at 984-987 is the NPXY motif element; that stretch reads NPAY. A Phosphotyrosine modification is found at tyrosine 987. The interval 1004–1115 is disordered; the sequence is SFARAPIPPT…PASTFLEEVA (112 aa). Composition is skewed to pro residues over residues 1049–1060 and 1088–1104; these read LPPPDFPPPPLP and GPPPPKAHPRPPLPPGT. Position 1132 is a phosphoserine (serine 1132). 2 positions are modified to phosphotyrosine: tyrosine 1136 and tyrosine 1161. The SAM domain maps to 1195 to 1257; it reads LGEAGMGAWL…LLLDTLQLSK (63 aa). Serine 1256 carries the post-translational modification Phosphoserine.

The protein belongs to the inositol 1,4,5-trisphosphate 5-phosphatase family. In terms of assembly, interacts with tyrosine phosphorylated form of SHC1. Interacts with EGFR. Upon stimulation by the EGF signaling pathway, it forms a complex with SHC1 and EGFR. Interacts with cytoskeletal protein SORBS3/vinexin, promoting its localization to the periphery of cells. Forms a complex with filamin (FLNA or FLNB), actin, GPIb (GP1BA or GP1BB) that regulates cortical and submembraneous actin. Interacts with c-Met/MET, when c-Met/MET is phosphorylated on 'Tyr-1356'. Interacts with p130Cas/BCAR1. Interacts with CENTD3/ARAP3 via its SAM domain. Interacts with c-Cbl/CBL and CAP/SORBS1. Interacts with activated EPHA2 receptor. Interacts with receptors FCGR2A. Interacts with FCGR2B. Interacts with tyrosine kinase ABL1. Interacts with tyrosine kinase TEC. Interacts with CSF1R. Interacts (via N-terminus) with SH3YL1 (via SH3 domain). Interacts (via SH2 domain) with tyrosine phosphorylated KLRC1 (via ITIM). Interacts with NEDD9/HEF1. Post-translationally, tyrosine phosphorylated by the members of the SRC family after exposure to a diverse array of extracellular stimuli such as insulin, growth factors such as EGF or PDGF, chemokines, integrin ligands and hypertonic and oxidative stress. May be phosphorylated upon IgG receptor FCGR2B-binding. Phosphorylated at Tyr-987 following cell attachment and spreading. Phosphorylated at Tyr-1161 following EGF signaling pathway stimulation.

It localises to the cytoplasm. It is found in the cytosol. Its subcellular location is the cytoskeleton. The protein resides in the membrane. The protein localises to the cell projection. It localises to the filopodium. It is found in the lamellipodium. Its subcellular location is the basal cell membrane. The protein resides in the nucleus. The protein localises to the nucleus speckle. It localises to the spindle pole. It catalyses the reaction a 1,2-diacyl-sn-glycero-3-phospho-(1D-myo-inositol-3,4,5-trisphosphate) + H2O = a 1,2-diacyl-sn-glycero-3-phospho-(1D-myo-inositol-3,4-bisphosphate) + phosphate. The catalysed reaction is 1,2-dioctanoyl-sn-glycero-3-phospho-(1D-myo-inositol-3,4,5-trisphosphate) + H2O = 1,2-dioctanoyl-sn-glycero-3-phospho-(1D-myo-inositol-3,4-bisphosphate) + phosphate. The enzyme catalyses 1,2-dihexadecanoyl-sn-glycero-3-phospho-(1D-myo-inositol-3,4,5-trisphosphate) + H2O = 1,2-dihexadecanoyl-sn-glycero-3-phospho-(1D-myo-inositol-3,4-bisphosphate) + phosphate. Activated upon translocation to the sites of synthesis of PtdIns(3,4,5)P3 in the membrane. Enzymatic activity is enhanced in the presence of phosphatidylserine. In terms of biological role, phosphatidylinositol (PtdIns) phosphatase that specifically hydrolyzes the 5-phosphate of phosphatidylinositol-3,4,5-trisphosphate (PtdIns(3,4,5)P3) to produce PtdIns(3,4)P2, thereby negatively regulating the PI3K (phosphoinositide 3-kinase) pathways. Required for correct mitotic spindle orientation and therefore progression of mitosis. Plays a central role in regulation of PI3K-dependent insulin signaling, although the precise molecular mechanisms and signaling pathways remain unclear. While overexpression reduces both insulin-stimulated MAP kinase and Akt activation, its absence does not affect insulin signaling or GLUT4 trafficking. Confers resistance to dietary obesity. May act by regulating AKT2, but not AKT1, phosphorylation at the plasma membrane. Part of a signaling pathway that regulates actin cytoskeleton remodeling. Required for the maintenance and dynamic remodeling of actin structures as well as in endocytosis, having a major impact on ligand-induced EGFR internalization and degradation. Participates in regulation of cortical and submembraneous actin by hydrolyzing PtdIns(3,4,5)P3 thereby regulating membrane ruffling. Regulates cell adhesion and cell spreading. Required for HGF-mediated lamellipodium formation, cell scattering and spreading. Acts as a negative regulator of EPHA2 receptor endocytosis by inhibiting via PI3K-dependent Rac1 activation. Acts as a regulator of neuritogenesis by regulating PtdIns(3,4,5)P3 level and is required to form an initial protrusive pattern, and later, maintain proper neurite outgrowth. Acts as a negative regulator of the FC-gamma-RIIA receptor (FCGR2A). Mediates signaling from the FC-gamma-RIIB receptor (FCGR2B), playing a central role in terminating signal transduction from activating immune/hematopoietic cell receptor systems. Involved in EGF signaling pathway. Upon stimulation by EGF, it is recruited by EGFR and dephosphorylates PtdIns(3,4,5)P3. Plays a negative role in regulating the PI3K-PKB pathway, possibly by inhibiting PKB activity. Down-regulates Fc-gamma-R-mediated phagocytosis in macrophages independently of INPP5D/SHIP1. In macrophages, down-regulates NF-kappa-B-dependent gene transcription by regulating macrophage colony-stimulating factor (M-CSF)-induced signaling. Plays a role in the localization of AURKA and NEDD9/HEF1 to the basolateral membrane at interphase in polarized cysts, thereby mediates cell cycle homeostasis, cell polarization and cilia assembly. Additionally promotion of cilia growth is also facilitated by hydrolysis of (PtdIns(3,4,5)P3) to PtdIns(3,4)P2. Promotes formation of apical membrane-initiation sites during the initial stages of lumen formation via Rho family-induced actin filament organization and CTNNB1 localization to cell-cell contacts. May also hydrolyze PtdIns(1,3,4,5)P4, and could thus affect the levels of the higher inositol polyphosphates like InsP6. Involved in endochondral ossification. The sequence is that of Phosphatidylinositol 3,4,5-trisphosphate 5-phosphatase 2 from Rattus norvegicus (Rat).